The sequence spans 163 residues: RRM-domain-containing protein ECU01_0840 (163 aa).

An RRM domain is found at 84-163 (CSVKLSNLPL…SLGLSAEIAR (80 aa)).

In Encephalitozoon cuniculi (strain GB-M1) (Microsporidian parasite), this protein is RRM-domain-containing protein ECU01_0840.